The primary structure comprises 44 residues: Protein PsbN (44 aa).

Residues 6-26 form a helical membrane-spanning segment; the sequence is FFFTFFLWFLLLSVTGYSVYV.

The protein belongs to the PsbN family.

Its subcellular location is the plastid. It is found in the chloroplast thylakoid membrane. Its function is as follows. May play a role in photosystem I and II biogenesis. This is Protein PsbN from Chlamydomonas reinhardtii (Chlamydomonas smithii).